Reading from the N-terminus, the 340-residue chain is Phenylalanine--tRNA ligase alpha subunit (340 aa).

Mg(2+) is bound at residue Glu251.

The protein belongs to the class-II aminoacyl-tRNA synthetase family. Phe-tRNA synthetase alpha subunit type 1 subfamily. In terms of assembly, tetramer of two alpha and two beta subunits. Mg(2+) serves as cofactor.

It is found in the cytoplasm. It catalyses the reaction tRNA(Phe) + L-phenylalanine + ATP = L-phenylalanyl-tRNA(Phe) + AMP + diphosphate + H(+). The polypeptide is Phenylalanine--tRNA ligase alpha subunit (Porphyromonas gingivalis (strain ATCC 33277 / DSM 20709 / CIP 103683 / JCM 12257 / NCTC 11834 / 2561)).